The sequence spans 279 residues: Four and a half LIM domains protein 2 (279 aa).

A C4-type zinc finger spans residues 7–31 (CHHCNESLYGKKYILKEENPHCVAC). LIM zinc-binding domains are found at residues 40–92 (CEEC…CTDC), 101–153 (CQEC…CVPC), and 162–212 (CVQC…CLTC). Lys-78 participates in a covalent cross-link: Glycyl lysine isopeptide (Lys-Gly) (interchain with G-Cter in SUMO2). Glycyl lysine isopeptide (Lys-Gly) (interchain with G-Cter in SUMO2) cross-links involve residues Lys-167 and Lys-220. An LIM zinc-binding 4 domain is found at 221 to 275 (CAGCTNPISGLGGTKYISFEERQWHNDCFNCKKCSLSLVGRGFLTERDDILCPDC). At Ser-238 the chain carries Phosphoserine.

Interacts with ZNF638 and TTN/titin. Interacts with E4F1. Interacts with GRB7. Interacts with SIRT1 and FOXO1. Interacts with CEFIP. Interacts with calcineurin. Interacts with FOXK1. In terms of tissue distribution, highly expressed in heart but also detectable in brain and skeletal muscle.

The protein resides in the cytoplasm. It is found in the nucleus. Its subcellular location is the myofibril. The protein localises to the sarcomere. It localises to the z line. In terms of biological role, may function as a molecular transmitter linking various signaling pathways to transcriptional regulation. Negatively regulates the transcriptional repressor E4F1 and may function in cell growth. Inhibits the transcriptional activity of FOXO1 and its apoptotic function by enhancing the interaction of FOXO1 with SIRT1 and FOXO1 deacetylation. Negatively regulates the calcineurin/NFAT signaling pathway in cardiomyocytes. The sequence is that of Four and a half LIM domains protein 2 (Fhl2) from Mus musculus (Mouse).